Consider the following 133-residue polypeptide: FPRL1 inhibitory protein (133 aa).

A signal peptide spans 1-28 (MKKNITKTIIASTVIAAGLLTQTNDAKA).

The protein belongs to the CHIPS/FLIPr family.

Its subcellular location is the secreted. In terms of biological role, may be involved in countering the first line of host defense mechanisms. Impairs the leukocyte response to FPRL1 agonists by binding directly to host FPRL1. This is FPRL1 inhibitory protein (flr) from Staphylococcus aureus (strain Mu50 / ATCC 700699).